The following is a 327-amino-acid chain: Phenylalanine--tRNA ligase alpha subunit (327 aa).

Glu252 contacts Mg(2+).

The protein belongs to the class-II aminoacyl-tRNA synthetase family. Phe-tRNA synthetase alpha subunit type 1 subfamily. Tetramer of two alpha and two beta subunits. The cofactor is Mg(2+).

The protein resides in the cytoplasm. The enzyme catalyses tRNA(Phe) + L-phenylalanine + ATP = L-phenylalanyl-tRNA(Phe) + AMP + diphosphate + H(+). This Shewanella amazonensis (strain ATCC BAA-1098 / SB2B) protein is Phenylalanine--tRNA ligase alpha subunit.